We begin with the raw amino-acid sequence, 48 residues long: Large ribosomal subunit protein bL34 (48 aa).

Belongs to the bacterial ribosomal protein bL34 family.

In Mycoplasma genitalium (strain ATCC 33530 / DSM 19775 / NCTC 10195 / G37) (Mycoplasmoides genitalium), this protein is Large ribosomal subunit protein bL34 (rpmH).